Reading from the N-terminus, the 185-residue chain is Elongation factor P (185 aa).

This sequence belongs to the elongation factor P family.

It localises to the cytoplasm. The protein operates within protein biosynthesis; polypeptide chain elongation. Involved in peptide bond synthesis. Stimulates efficient translation and peptide-bond synthesis on native or reconstituted 70S ribosomes in vitro. Probably functions indirectly by altering the affinity of the ribosome for aminoacyl-tRNA, thus increasing their reactivity as acceptors for peptidyl transferase. The sequence is that of Elongation factor P from Paraburkholderia phymatum (strain DSM 17167 / CIP 108236 / LMG 21445 / STM815) (Burkholderia phymatum).